Here is a 233-residue protein sequence, read N- to C-terminus: Large ribosomal subunit protein uL1 (233 aa).

This sequence belongs to the universal ribosomal protein uL1 family. Part of the 50S ribosomal subunit.

Functionally, binds directly to 23S rRNA. The L1 stalk is quite mobile in the ribosome, and is involved in E site tRNA release. In terms of biological role, protein L1 is also a translational repressor protein, it controls the translation of the L11 operon by binding to its mRNA. This is Large ribosomal subunit protein uL1 from Rhizobium etli (strain CIAT 652).